The following is a 294-amino-acid chain: MASLKEMRNRIASVKATQKITKAMQMVAAAKLRRSQDAAEAARPYARRLAAVIANLAAGVTGDGAPPMLAGTGRDDRHLIIVAAADRGLAGGFTSSIVRAARERIETLIAQGKDVKIVCIGKKSTAQLRRLYSDRIVEDFDLSAYRQFTLTVAQPIADVVTRLYEAGDVDVVTLFYSRFKSVVIQTPTALQLIPATVDGANAPAAAQGAQAVYEYEPSEEEILETLLPRNLTVQILSALLDNMAGFYASQMTAMDNATRNAGDMIKRYTLEYNRSRQAQITKELIEIISGAEAV.

The protein belongs to the ATPase gamma chain family. In terms of assembly, F-type ATPases have 2 components, CF(1) - the catalytic core - and CF(0) - the membrane proton channel. CF(1) has five subunits: alpha(3), beta(3), gamma(1), delta(1), epsilon(1). CF(0) has three main subunits: a, b and c.

Its subcellular location is the cell inner membrane. Produces ATP from ADP in the presence of a proton gradient across the membrane. The gamma chain is believed to be important in regulating ATPase activity and the flow of protons through the CF(0) complex. This is ATP synthase gamma chain from Caulobacter sp. (strain K31).